The following is a 513-amino-acid chain: ATP synthase subunit alpha (513 aa).

171–178 (GDRQIGKT) provides a ligand contact to ATP.

It belongs to the ATPase alpha/beta chains family. As to quaternary structure, F-type ATPases have 2 components, CF(1) - the catalytic core - and CF(0) - the membrane proton channel. CF(1) has five subunits: alpha(3), beta(3), gamma(1), delta(1), epsilon(1). CF(0) has three main subunits: a(1), b(2) and c(9-12). The alpha and beta chains form an alternating ring which encloses part of the gamma chain. CF(1) is attached to CF(0) by a central stalk formed by the gamma and epsilon chains, while a peripheral stalk is formed by the delta and b chains.

It localises to the cell inner membrane. The catalysed reaction is ATP + H2O + 4 H(+)(in) = ADP + phosphate + 5 H(+)(out). Functionally, produces ATP from ADP in the presence of a proton gradient across the membrane. The alpha chain is a regulatory subunit. This chain is ATP synthase subunit alpha, found in Wolbachia sp. subsp. Drosophila simulans (strain wRi).